The chain runs to 290 residues: MSSAVTPSDQGLLPRGPIALEEFVKPFCDRFGLTKLPRHMHVILLSALFYQIINILSPVISRHLSTHYAKLSKKTRLNWDAHVVSSVQSIVLICLGYTCLKEVNAFPDKLFGYSVVAGDIYALTAGYFVWDLYITVRYVHITGIGFVIHAIAALFVITFSYRPYLMYYGPTYLSWELSTPFLNIHYFLDKTNRTGSKFQMINGFILIVTFICVRIAWGWFSAYSTAIEILNHINVAPWALSLFYLAANMSLNCLNLFWVSKMIDAIRRRAHGEKKSTPLQVTSEYAKKNI.

Helical transmembrane passes span 40 to 60 (MHVILLSALFYQIINILSPVI), 80 to 100 (DAHVVSSVQSIVLICLGYTCL), 110 to 130 (LFGYSVVAGDIYALTAGYFVW), 139 to 159 (VHITGIGFVIHAIAALFVITF), 166 to 188 (MYYGPTYLSWELSTPFLNIHYFL), 200 to 220 (MINGFILIVTFICVRIAWGWF), and 238 to 260 (WALSLFYLAANMSLNCLNLFWVS). One can recognise a TLC domain in the interval 74 to 271 (KTRLNWDAHV…MIDAIRRRAH (198 aa)).

The protein localises to the endoplasmic reticulum membrane. This is an uncharacterized protein from Schizosaccharomyces pombe (strain 972 / ATCC 24843) (Fission yeast).